The primary structure comprises 193 residues: NAD(P)H-quinone oxidoreductase subunit I (193 aa).

2 consecutive 4Fe-4S ferredoxin-type domains span residues 55–84 (GRIH…VDWE) and 95–124 (KHYS…VTEE). [4Fe-4S] cluster contacts are provided by cysteine 64, cysteine 67, cysteine 70, cysteine 74, cysteine 104, cysteine 107, cysteine 110, and cysteine 114.

It belongs to the complex I 23 kDa subunit family. NDH-1 is composed of at least 11 different subunits. Requires [4Fe-4S] cluster as cofactor.

The protein resides in the cellular thylakoid membrane. It catalyses the reaction a plastoquinone + NADH + (n+1) H(+)(in) = a plastoquinol + NAD(+) + n H(+)(out). The enzyme catalyses a plastoquinone + NADPH + (n+1) H(+)(in) = a plastoquinol + NADP(+) + n H(+)(out). NDH-1 shuttles electrons from an unknown electron donor, via FMN and iron-sulfur (Fe-S) centers, to quinones in the respiratory and/or the photosynthetic chain. The immediate electron acceptor for the enzyme in this species is believed to be plastoquinone. Couples the redox reaction to proton translocation, and thus conserves the redox energy in a proton gradient. In Cyanothece sp. (strain PCC 7425 / ATCC 29141), this protein is NAD(P)H-quinone oxidoreductase subunit I.